A 389-amino-acid polypeptide reads, in one-letter code: Endo-chitosanase C (389 aa).

Residues 1 to 22 (MPIKSFASRLALSLAICGTAMG) form the signal peptide. An R3-1 repeat occupies 280-313 (CSWPGHCAGFKNKGATCSSNDDCSDDLACQNGKC). Residues 320–350 (ETCSWEGHCKGATCSSNDDCSDELACISGIC) form an R3-2 repeat. One copy of the R3-3 repeat lies at 357 to 387 (ETCEWEGHCEGASCSSHDDCDGNLACKNGKC).

The protein belongs to the glycosyl hydrolase 75 family.

The protein localises to the secreted. The catalysed reaction is Endohydrolysis of beta-(1-&gt;4)-linkages between D-glucosamine residues in a partly acetylated chitosan.. Its function is as follows. Chitosanase catalyzing the endo-type cleavage of chitosan, the deacylated form of chitin. Chitosanase may be crucial in the degradation of the deacetylated portion of chitin in the fungal cell wall. Chitoolisaccharides produced by the hydrolysis of partially N-acetylated chitosan are known to have many biological activities, including antibacterial activity, immune-enhancing effects, and elicitor activity. This chain is Endo-chitosanase C (csnC), found in Aspergillus oryzae (strain ATCC 42149 / RIB 40) (Yellow koji mold).